The chain runs to 173 residues: Ribosome maturation factor RimM (173 aa).

The 75-residue stretch at 94-168 folds into the PRC barrel domain; that stretch reads SNESYLCDLL…LIRINPPKGL (75 aa).

The protein belongs to the RimM family. In terms of assembly, binds ribosomal protein uS19.

The protein localises to the cytoplasm. An accessory protein needed during the final step in the assembly of 30S ribosomal subunit, possibly for assembly of the head region. Essential for efficient processing of 16S rRNA. May be needed both before and after RbfA during the maturation of 16S rRNA. It has affinity for free ribosomal 30S subunits but not for 70S ribosomes. In Lawsonia intracellularis (strain PHE/MN1-00), this protein is Ribosome maturation factor RimM.